A 203-amino-acid chain; its full sequence is Ras-like protein family member 10B (203 aa).

The small GTPase-like stretch occupies residues 1–203 (MVSTYRVAVL…ALRRNRCAIM (203 aa)). 11–18 (GARGVGKS) serves as a coordination point for GTP. An Effector region motif is present at residues 33–42 (CVPTTARRLY). Residues 59 to 62 (DFPP) and 128 to 131 (NKRD) contribute to the GTP site. Cys200 is subject to Cysteine methyl ester. Cys200 carries S-geranylgeranyl cysteine lipidation. The propeptide at 201-203 (AIM) is removed in mature form.

The protein belongs to the small GTPase superfamily. Ras family. Interacts with CADPS. In terms of tissue distribution, expressed at high levels in skeletal muscle and, at much lower levels, in heart, brain and pancreas.

It is found in the cell membrane. It catalyses the reaction GTP + H2O = GDP + phosphate + H(+). Its function is as follows. May facilitate the release of atrial natriuretic peptide by cardiomyocytes and hence play a role in the regulation of arterial pressure. In Homo sapiens (Human), this protein is Ras-like protein family member 10B (RASL10B).